The primary structure comprises 372 residues: Cytochrome b (372 aa).

Helical transmembrane passes span Phe-25–Ile-45, Trp-69–Ile-90, Trp-105–Leu-125, and Phe-170–Ile-190. Positions 75 and 89 each coordinate heme b. His-174 and His-188 together coordinate heme b. His-193 serves as a coordination point for a ubiquinone. 4 consecutive transmembrane segments (helical) span residues Tyr-218–Ser-238, Leu-280–His-300, Leu-312–Thr-332, and Phe-339–Pro-358.

The protein belongs to the cytochrome b family. As to quaternary structure, the cytochrome bc1 complex contains 3 respiratory subunits (MT-CYB, CYC1 and UQCRFS1), 2 core proteins (UQCRC1 and UQCRC2) and probably 6 low-molecular weight proteins. The cofactor is heme b.

The protein resides in the mitochondrion inner membrane. Component of the ubiquinol-cytochrome c reductase complex (complex III or cytochrome b-c1 complex) that is part of the mitochondrial respiratory chain. The b-c1 complex mediates electron transfer from ubiquinol to cytochrome c. Contributes to the generation of a proton gradient across the mitochondrial membrane that is then used for ATP synthesis. The chain is Cytochrome b (MT-CYB) from Dendroaspis polylepis polylepis (Black mamba).